A 102-amino-acid chain; its full sequence is Co-chaperonin GroES (102 aa).

It belongs to the GroES chaperonin family. Heptamer of 7 subunits arranged in a ring. Interacts with the chaperonin GroEL.

The protein resides in the cytoplasm. Functionally, together with the chaperonin GroEL, plays an essential role in assisting protein folding. The GroEL-GroES system forms a nano-cage that allows encapsulation of the non-native substrate proteins and provides a physical environment optimized to promote and accelerate protein folding. GroES binds to the apical surface of the GroEL ring, thereby capping the opening of the GroEL channel. The chain is Co-chaperonin GroES from Vibrio harveyi (Beneckea harveyi).